Consider the following 520-residue polypeptide: Sterile alpha motif domain-containing protein 3 (520 aa).

In terms of domain architecture, SAM spans Trp-4–Lys-71. The disordered stretch occupies residues Thr-85–Asn-114.

This Homo sapiens (Human) protein is Sterile alpha motif domain-containing protein 3 (SAMD3).